The chain runs to 130 residues: Small ribosomal subunit protein uS8 (130 aa).

Lys88 is modified (N6-succinyllysine).

The protein belongs to the universal ribosomal protein uS8 family. Component of the 40S ribosomal subunit. Part of the small subunit (SSU) processome, composed of more than 70 proteins and the RNA chaperone small nucleolar RNA (snoRNA) U3.

Its subcellular location is the cytoplasm. The protein localises to the nucleus. It localises to the nucleolus. Functionally, component of the small ribosomal subunit. Part of the small subunit (SSU) processome, first precursor of the small eukaryotic ribosomal subunit. During the assembly of the SSU processome in the nucleolus, many ribosome biogenesis factors, an RNA chaperone and ribosomal proteins associate with the nascent pre-rRNA and work in concert to generate RNA folding, modifications, rearrangements and cleavage as well as targeted degradation of pre-ribosomal RNA by the RNA exosome. Required for proper erythropoiesis. The chain is Small ribosomal subunit protein uS8 (RPS15A) from Pongo abelii (Sumatran orangutan).